The following is a 163-amino-acid chain: Cyclic pyranopterin monophosphate synthase (163 aa).

Substrate is bound by residues 76–78 and 114–115; these read LCH and ME. The active site involves D129.

This sequence belongs to the MoaC family. Homohexamer; trimer of dimers.

The enzyme catalyses (8S)-3',8-cyclo-7,8-dihydroguanosine 5'-triphosphate = cyclic pyranopterin phosphate + diphosphate. It participates in cofactor biosynthesis; molybdopterin biosynthesis. Catalyzes the conversion of (8S)-3',8-cyclo-7,8-dihydroguanosine 5'-triphosphate to cyclic pyranopterin monophosphate (cPMP). The protein is Cyclic pyranopterin monophosphate synthase of Desulfovibrio desulfuricans (strain ATCC 27774 / DSM 6949 / MB).